The following is a 719-amino-acid chain: Ribosomal RNA large subunit methyltransferase K/L (719 aa).

In terms of domain architecture, THUMP spans T43–L154.

It belongs to the methyltransferase superfamily. RlmKL family.

It localises to the cytoplasm. The catalysed reaction is guanosine(2445) in 23S rRNA + S-adenosyl-L-methionine = N(2)-methylguanosine(2445) in 23S rRNA + S-adenosyl-L-homocysteine + H(+). The enzyme catalyses guanosine(2069) in 23S rRNA + S-adenosyl-L-methionine = N(2)-methylguanosine(2069) in 23S rRNA + S-adenosyl-L-homocysteine + H(+). In terms of biological role, specifically methylates the guanine in position 2445 (m2G2445) and the guanine in position 2069 (m7G2069) of 23S rRNA. This chain is Ribosomal RNA large subunit methyltransferase K/L, found in Pasteurella multocida (strain Pm70).